We begin with the raw amino-acid sequence, 287 residues long: Alpha-tubulin N-acetyltransferase 2 (287 aa).

Residues 2–193 (VEFAFDIKHL…NNFVLYEGFF (192 aa)) enclose the N-acetyltransferase domain. Acetyl-CoA-binding positions include 127-140 (FYVH…GQGK) and 163-172 (SNKMLAFMAK).

It belongs to the acetyltransferase ATAT1 family.

Its subcellular location is the midbody. It is found in the midbody ring. It catalyses the reaction L-lysyl-[alpha-tubulin] + acetyl-CoA = N(6)-acetyl-L-lysyl-[alpha-tubulin] + CoA + H(+). In terms of biological role, specifically acetylates 'Lys-40' in alpha-tubulin on the lumenal side of microtubules. Promotes microtubule destabilization and accelerates microtubule dynamics; this activity may be independent of acetylation activity. Acetylates alpha-tubulin with a slow enzymatic rate, due to a catalytic site that is not optimized for acetyl transfer. Enters the microtubule through each end and diffuses quickly throughout the lumen of microtubules. Acetylates only long/old microtubules because of its slow acetylation rate since it does not have time to act on dynamically unstable microtubules before the enzyme is released. Main acetyltransferase responsible for alpha-tubulin 'Lys-40' acetylation in germline cells during the early stages of oogenesis. Required for normal egg chamber separation. The protein is Alpha-tubulin N-acetyltransferase 2 of Drosophila melanogaster (Fruit fly).